The primary structure comprises 243 residues: Anti-H(O) lectin 1 (243 aa).

N-linked (GlcNAc...) asparagine; partial glycosylation occurs at Asn-10. A glycan (N-linked (GlcNAc...) asparagine) is linked at Asn-116. Mn(2+) contacts are provided by Glu-126 and Asp-128. Ca(2+) contacts are provided by Asp-128, Asn-135, and Asp-138. Mn(2+)-binding residues include Asp-138 and His-143.

It belongs to the leguminous lectin family.

In terms of biological role, L-fucose specific lectin. The chain is Anti-H(O) lectin 1 from Ulex europaeus (Furze).